The following is a 479-amino-acid chain: Transcription factor CP2-like protein 1 (479 aa).

The Grh/CP2 DB domain maps to 43-280 (RLPPLQYVLC…PSPSYNGSPN (238 aa)). Disordered stretches follow at residues 219–245 (KPKG…KEKY) and 271–301 (PSPS…LPVG). Basic and acidic residues predominate over residues 221-245 (KGADRKQKTDREKMEKRTAQEKEKY). The SAM2-like domain stretch occupies residues 261–365 (PDVAYQVNSA…IRLFNAIKGR (105 aa)). Polar residues predominate over residues 271–281 (PSPSYNGSPNS).

This sequence belongs to the grh/CP2 family. CP2 subfamily. In terms of assembly, forms homohexamers via its SAM-like domain. Interacts with MTA1; which is indispensable for TFCP2l1-mediated self-renewal-promoting effect and endoderm-inhibiting action. In terms of tissue distribution, highly expressed in placental JEG-3 cells and very low levels of expression in non-steroidogenic cells. No expression was seen in adrenal NCI-H295A cells or in adrenal tissue.

Its subcellular location is the nucleus. Transcription factor that facilitates establishment and maintenance of pluripotency in embryonic stem cells (ESCs). With KLF2, acts as the major effector of self-renewal that mediates induction of pluripotency downstream of LIF/STAT3 and Wnt/beta-catenin signaling. Required for normal duct development in the salivary gland and kidney. Coordinates the development of the kidney collecting ducts intercalated (IC) and principal (PC) cells, which regulate acid-base and salt-water homeostasis, respectively. Regulates the expression of IC genes including subunits B1 and D2 of the V-ATPase complex, OXGR1, CA12, SLC4A1, AQP6 and IC-specific transcription factor FOXI1. Also regulates the expression of JAG1 and subsequent notch signaling in the collecting duct. JAG1 initiates notch signaling in PCs but inhibits notch signaling in ICs. Acts as a transcriptional suppressor that may suppress UBP1-mediated transcriptional activation. Modulates the placental expression of CYP11A1. This is Transcription factor CP2-like protein 1 (TFCP2L1) from Homo sapiens (Human).